A 458-amino-acid chain; its full sequence is MKRNFDDFKQFIKCKKIGVVGIGISNKPLIDFLLKLGARVSAFDKKSPDEIGEVARELKEKNVDLVLGEKYLNDLSDFDIIFKTPSMRIDSPAFVKAKEKGAYITSEMEEFIRYCPAKIYGVTGSDGKTTTTTLMYNILKKQGYKSWIGGNIGTPLFSEVEEITPDDRVVIELSSFQLMTMNISPEVAVITNVSPNHLDIHKDMEEYIMAKKNIFKYQSNSDLLVLNKDNELTNSMTGEALGKVRQFSIKEKLNKGGYLNKDSLCIDGDEVCKLSEIKLKGMHNVENLLAAFCALKDDVNIESMREIATTFSGVEHRCEFVREINGVKYYNDSIASSPTRTLAGLKAFEKPVILIAGGYDKKIPFDILAEEGYSKIKTLVLMGATKYKIKEAFENLELKKHVHIPIIMANSLVEAVNSARKVSCRGDVVTLSPACASFDMFANFEIRGNMFKEIVNDM.

124-130 (GSDGKTT) is an ATP binding site.

Belongs to the MurCDEF family.

The protein resides in the cytoplasm. The catalysed reaction is UDP-N-acetyl-alpha-D-muramoyl-L-alanine + D-glutamate + ATP = UDP-N-acetyl-alpha-D-muramoyl-L-alanyl-D-glutamate + ADP + phosphate + H(+). It functions in the pathway cell wall biogenesis; peptidoglycan biosynthesis. Functionally, cell wall formation. Catalyzes the addition of glutamate to the nucleotide precursor UDP-N-acetylmuramoyl-L-alanine (UMA). This chain is UDP-N-acetylmuramoylalanine--D-glutamate ligase, found in Clostridium kluyveri (strain NBRC 12016).